The sequence spans 307 residues: Malate dehydrogenase (307 aa).

Residues 8-13 (GAGNVG) and D32 each bind NAD(+). 2 residues coordinate substrate: R81 and R87. Residues N94 and 117-119 (VSN) contribute to the NAD(+) site. 2 residues coordinate substrate: N119 and R150. H174 serves as the catalytic Proton acceptor.

The protein belongs to the LDH/MDH superfamily. MDH type 3 family.

The enzyme catalyses (S)-malate + NAD(+) = oxaloacetate + NADH + H(+). Functionally, catalyzes the reversible oxidation of malate to oxaloacetate. The chain is Malate dehydrogenase from Dehalococcoides mccartyi (strain ATCC BAA-2266 / KCTC 15142 / 195) (Dehalococcoides ethenogenes (strain 195)).